A 240-amino-acid chain; its full sequence is Uridylate kinase (240 aa).

Residue 15 to 18 (KLSG) coordinates ATP. The interval 23-28 (GSEGFG) is involved in allosteric activation by GTP. Position 57 (Gly-57) interacts with UMP. Positions 58 and 62 each coordinate ATP. Residues Asp-77 and 138-145 (TGNPFFTT) each bind UMP. ATP is bound by residues Thr-165, Tyr-171, and Asp-174.

The protein belongs to the UMP kinase family. Homohexamer.

It is found in the cytoplasm. It catalyses the reaction UMP + ATP = UDP + ADP. Its pathway is pyrimidine metabolism; CTP biosynthesis via de novo pathway; UDP from UMP (UMPK route): step 1/1. Its activity is regulated as follows. Allosterically activated by GTP. Inhibited by UTP. Catalyzes the reversible phosphorylation of UMP to UDP. The polypeptide is Uridylate kinase (Photobacterium profundum (strain SS9)).